The sequence spans 132 residues: Small ribosomal subunit protein uS19 (132 aa).

This sequence belongs to the universal ribosomal protein uS19 family.

In terms of biological role, protein S19 forms a complex with S13 that binds strongly to the 16S ribosomal RNA. This is Small ribosomal subunit protein uS19 (rps19) from Pyrococcus horikoshii (strain ATCC 700860 / DSM 12428 / JCM 9974 / NBRC 100139 / OT-3).